The primary structure comprises 167 residues: SsrA-binding protein (167 aa).

Residues 139-167 (QAHDKRHAEKEREWQRDKQRIMRAHNRNA) are disordered. Positions 144–158 (RHAEKEREWQRDKQR) are enriched in basic and acidic residues.

This sequence belongs to the SmpB family.

The protein localises to the cytoplasm. Required for rescue of stalled ribosomes mediated by trans-translation. Binds to transfer-messenger RNA (tmRNA), required for stable association of tmRNA with ribosomes. tmRNA and SmpB together mimic tRNA shape, replacing the anticodon stem-loop with SmpB. tmRNA is encoded by the ssrA gene; the 2 termini fold to resemble tRNA(Ala) and it encodes a 'tag peptide', a short internal open reading frame. During trans-translation Ala-aminoacylated tmRNA acts like a tRNA, entering the A-site of stalled ribosomes, displacing the stalled mRNA. The ribosome then switches to translate the ORF on the tmRNA; the nascent peptide is terminated with the 'tag peptide' encoded by the tmRNA and targeted for degradation. The ribosome is freed to recommence translation, which seems to be the essential function of trans-translation. The protein is SsrA-binding protein of Xylella fastidiosa (strain M23).